Reading from the N-terminus, the 237-residue chain is Ribosomal RNA small subunit methyltransferase G (237 aa).

Residues Gly-78, Phe-83, 129–130 (AE), and Arg-148 contribute to the S-adenosyl-L-methionine site.

The protein belongs to the methyltransferase superfamily. RNA methyltransferase RsmG family.

The protein localises to the cytoplasm. Functionally, specifically methylates the N7 position of a guanine in 16S rRNA. In Streptococcus pyogenes serotype M4 (strain MGAS10750), this protein is Ribosomal RNA small subunit methyltransferase G.